Consider the following 75-residue polypeptide: Putative defensin-like protein 55 (75 aa).

An N-terminal signal peptide occupies residues 1–19 (MNITKAYVIFFLVVILTNS). 4 disulfides stabilise this stretch: Cys39–Cys73, Cys43–Cys66, Cys52–Cys71, and Cys56–Cys72.

This sequence belongs to the DEFL family.

It is found in the secreted. The protein is Putative defensin-like protein 55 of Arabidopsis thaliana (Mouse-ear cress).